Reading from the N-terminus, the 328-residue chain is Ferredoxin--NADP reductase (328 aa).

Residues S14, E33, Q41, Y46, I90, and F126 each coordinate FAD.

This sequence belongs to the ferredoxin--NADP reductase type 2 family. In terms of assembly, homodimer. It depends on FAD as a cofactor.

The enzyme catalyses 2 reduced [2Fe-2S]-[ferredoxin] + NADP(+) + H(+) = 2 oxidized [2Fe-2S]-[ferredoxin] + NADPH. This Mycoplasmoides gallisepticum (strain R(low / passage 15 / clone 2)) (Mycoplasma gallisepticum) protein is Ferredoxin--NADP reductase.